The sequence spans 249 residues: Probable transcriptional regulatory protein FN1661 (249 aa).

Residues 1–10 (MSGHSKWNNI) are compositionally biased toward polar residues. Residues 1-20 (MSGHSKWNNIQHRKGAQDKK) form a disordered region.

It belongs to the TACO1 family.

It is found in the cytoplasm. This is Probable transcriptional regulatory protein FN1661 from Fusobacterium nucleatum subsp. nucleatum (strain ATCC 25586 / DSM 15643 / BCRC 10681 / CIP 101130 / JCM 8532 / KCTC 2640 / LMG 13131 / VPI 4355).